The chain runs to 245 residues: Bis(5'-nucleosyl)-tetraphosphatase PrpE [asymmetrical] (245 aa).

This sequence belongs to the PrpE family. Ni(2+) serves as cofactor.

The enzyme catalyses P(1),P(4)-bis(5'-guanosyl) tetraphosphate + H2O = GMP + GTP + 2 H(+). Its function is as follows. Asymmetrically hydrolyzes Ap4p to yield AMP and ATP. This Anoxybacillus flavithermus (strain DSM 21510 / WK1) protein is Bis(5'-nucleosyl)-tetraphosphatase PrpE [asymmetrical].